Here is a 432-residue protein sequence, read N- to C-terminus: Tol-Pal system protein TolB (432 aa).

A signal peptide spans 1-21 (MKKVIYTIVGFVFMWSTSVYA).

Belongs to the TolB family. As to quaternary structure, the Tol-Pal system is composed of five core proteins: the inner membrane proteins TolA, TolQ and TolR, the periplasmic protein TolB and the outer membrane protein Pal. They form a network linking the inner and outer membranes and the peptidoglycan layer.

It localises to the periplasm. Part of the Tol-Pal system, which plays a role in outer membrane invagination during cell division and is important for maintaining outer membrane integrity. This is Tol-Pal system protein TolB from Hydrogenovibrio crunogenus (strain DSM 25203 / XCL-2) (Thiomicrospira crunogena).